The primary structure comprises 317 residues: MSEETLSKKQITRLNKLQKRLRREVGSAIADYNMIEEGDTVMCCLSGGKDSYAMLDILVNLLQRAPVNFNLVAVNLDQKQPGFPEDILPAYLDSLKVPYHILEKDTYSIVKDKIPEGKTTCSLCSRLRRGTLYGFAQKIGATKIALGHHRDDIIETMFLNMFYAGKLKAMPPKLLSDDGANVVIRPLAYSREKDIAEYAELKAFPIIPCNLCGSQENLKRAAVKEMLKSWDKQFPGRIETIFTAMQNTSPSQGVDRDQFDFVSLKQDPDAPMKGDVAESDLPAFDFLDLANSGHIDLDAAKRSSDLLKIDVVSTYTP.

A PP-loop motif motif is present at residues 46–51; that stretch reads SGGKDS. [4Fe-4S] cluster contacts are provided by cysteine 121, cysteine 124, and cysteine 212.

Belongs to the TtcA family. In terms of assembly, homodimer. It depends on Mg(2+) as a cofactor. The cofactor is [4Fe-4S] cluster.

The protein localises to the cytoplasm. It catalyses the reaction cytidine(32) in tRNA + S-sulfanyl-L-cysteinyl-[cysteine desulfurase] + AH2 + ATP = 2-thiocytidine(32) in tRNA + L-cysteinyl-[cysteine desulfurase] + A + AMP + diphosphate + H(+). It functions in the pathway tRNA modification. In terms of biological role, catalyzes the ATP-dependent 2-thiolation of cytidine in position 32 of tRNA, to form 2-thiocytidine (s(2)C32). The sulfur atoms are provided by the cysteine/cysteine desulfurase (IscS) system. The polypeptide is tRNA-cytidine(32) 2-sulfurtransferase (Shewanella loihica (strain ATCC BAA-1088 / PV-4)).